The following is a 160-amino-acid chain: MKIRVGFGFDVHQLVTGRELWLGGIKFEHELGLLGHSDADVLIHAICDALLGAANMRDIGYHFPDTAGEFKNIDSKILLAETVDLIAAKGYKVGNVDATICAERPKLKARIPEMQLVLAHLMRIDVDDVSVKATTTEKLGFTGREEGISAYATVLIEKAE.

A divalent metal cation is bound by residues Asp10 and His12. 4-CDP-2-C-methyl-D-erythritol 2-phosphate-binding positions include 10 to 12 (DVH) and 36 to 37 (HS). His44 serves as a coordination point for a divalent metal cation. Residues 58–60 (DIG), 134–137 (TTTE), Phe141, and Arg144 contribute to the 4-CDP-2-C-methyl-D-erythritol 2-phosphate site.

This sequence belongs to the IspF family. As to quaternary structure, homotrimer. It depends on a divalent metal cation as a cofactor.

The catalysed reaction is 4-CDP-2-C-methyl-D-erythritol 2-phosphate = 2-C-methyl-D-erythritol 2,4-cyclic diphosphate + CMP. The protein operates within isoprenoid biosynthesis; isopentenyl diphosphate biosynthesis via DXP pathway; isopentenyl diphosphate from 1-deoxy-D-xylulose 5-phosphate: step 4/6. Its function is as follows. Involved in the biosynthesis of isopentenyl diphosphate (IPP) and dimethylallyl diphosphate (DMAPP), two major building blocks of isoprenoid compounds. Catalyzes the conversion of 4-diphosphocytidyl-2-C-methyl-D-erythritol 2-phosphate (CDP-ME2P) to 2-C-methyl-D-erythritol 2,4-cyclodiphosphate (ME-CPP) with a corresponding release of cytidine 5-monophosphate (CMP). The polypeptide is 2-C-methyl-D-erythritol 2,4-cyclodiphosphate synthase (Phocaeicola vulgatus (strain ATCC 8482 / DSM 1447 / JCM 5826 / CCUG 4940 / NBRC 14291 / NCTC 11154) (Bacteroides vulgatus)).